The following is a 156-amino-acid chain: Small ribosomal subunit protein uS7 (156 aa).

Belongs to the universal ribosomal protein uS7 family. Part of the 30S ribosomal subunit. Contacts proteins S9 and S11.

Functionally, one of the primary rRNA binding proteins, it binds directly to 16S rRNA where it nucleates assembly of the head domain of the 30S subunit. Is located at the subunit interface close to the decoding center, probably blocks exit of the E-site tRNA. This Methylorubrum populi (strain ATCC BAA-705 / NCIMB 13946 / BJ001) (Methylobacterium populi) protein is Small ribosomal subunit protein uS7.